The chain runs to 314 residues: UPF0761 membrane protein VP0125 (314 aa).

A run of 6 helical transmembrane segments spans residues 41–61, 104–124, 139–159, 185–205, 217–237, and 249–269; these read YLAY…LSIL, MSAV…SNID, LVFS…LVGA, FLRW…YILV, VGAA…ALYI, and ALAA…IVLL. The segment at 295-314 is disordered; sequence ESQLANEGSESSDSANSTSQ.

Belongs to the UPF0761 family.

The protein localises to the cell inner membrane. The chain is UPF0761 membrane protein VP0125 from Vibrio parahaemolyticus serotype O3:K6 (strain RIMD 2210633).